A 386-amino-acid chain; its full sequence is Succinate--CoA ligase [ADP-forming] subunit beta (386 aa).

The ATP-grasp domain maps to 9–244 (KHILSRFGVS…YDEEIKEEIE (236 aa)). ATP-binding positions include Lys-46, 53–55 (GRG), Glu-99, Cys-102, and Glu-107. Residues Asn-199 and Asp-213 each contribute to the Mg(2+) site. Substrate contacts are provided by residues Asn-264 and 320-322 (GIM).

The protein belongs to the succinate/malate CoA ligase beta subunit family. As to quaternary structure, heterotetramer of two alpha and two beta subunits. Requires Mg(2+) as cofactor.

The enzyme catalyses succinate + ATP + CoA = succinyl-CoA + ADP + phosphate. It catalyses the reaction GTP + succinate + CoA = succinyl-CoA + GDP + phosphate. It functions in the pathway carbohydrate metabolism; tricarboxylic acid cycle; succinate from succinyl-CoA (ligase route): step 1/1. Functionally, succinyl-CoA synthetase functions in the citric acid cycle (TCA), coupling the hydrolysis of succinyl-CoA to the synthesis of either ATP or GTP and thus represents the only step of substrate-level phosphorylation in the TCA. The beta subunit provides nucleotide specificity of the enzyme and binds the substrate succinate, while the binding sites for coenzyme A and phosphate are found in the alpha subunit. This is Succinate--CoA ligase [ADP-forming] subunit beta from Ehrlichia canis (strain Jake).